The following is a 392-amino-acid chain: MSAPLASLSHYKRIVIKIGSALLVDRGAGLKHAWLDAVCDDIAALRAKGVEVLVVSSGAIALGRTVLNLPGGALKLEESQAAAAVGQIALARHWSESLSRSSIVAGQILLTLGDTEERRRYLNARATISQLLKLGAVPIINENDTVATTEIRYGDNDRLAARVATMTGADLLILLSDIDGLYTAPPHLDPEAKLLPVIAEITPEIEAMAGGAASELSRGGMRTKIDAGKIATSAGCAMIITSGKLLNPLRGIDEGAAHSWFAPSAMPVTARKTWIAGQLQPAGILSVDAGAETALRAGKSLLPAGVREVSGHFHRGDTISVVGLEGREIARGLAGYDADEARRIAGHKSAEIEALLGYAGRSAMIHRDDLVMTEQTGRKAGKSTKKKDEAHA.

Lysine 17 serves as a coordination point for ATP. Residues serine 57, aspartate 144, and asparagine 156 each contribute to the substrate site. 176 to 177 (SD) is a binding site for ATP. A PUA domain is found at 282–359 (AGILSVDAGA…AEIEALLGYA (78 aa)). The segment at 373-392 (TEQTGRKAGKSTKKKDEAHA) is disordered.

The protein belongs to the glutamate 5-kinase family.

The protein localises to the cytoplasm. The enzyme catalyses L-glutamate + ATP = L-glutamyl 5-phosphate + ADP. Its pathway is amino-acid biosynthesis; L-proline biosynthesis; L-glutamate 5-semialdehyde from L-glutamate: step 1/2. Catalyzes the transfer of a phosphate group to glutamate to form L-glutamate 5-phosphate. This Allorhizobium ampelinum (strain ATCC BAA-846 / DSM 112012 / S4) (Agrobacterium vitis (strain S4)) protein is Glutamate 5-kinase.